The chain runs to 557 residues: IgE-binding protein (557 aa).

The segment at 113-172 (DGLGKPALSSSEAGEESSSEETDWEEEAAHYQPANWSRKKPKAAGEGQFADWPQGSRLQG) is disordered. Acidic residues predominate over residues 125-138 (AGEESSSEETDWEE). The 191-residue stretch at 344–534 (TAIRPGRRSR…TAAERHVQSQ (191 aa)) folds into the Integrase catalytic domain.

This chain is IgE-binding protein (Iap), found in Mus musculus (Mouse).